We begin with the raw amino-acid sequence, 427 residues long: Serine hydroxymethyltransferase (427 aa).

122–124 is a (6S)-5,6,7,8-tetrahydrofolate binding site; the sequence is GHI. N6-(pyridoxal phosphate)lysine is present on lysine 228.

Belongs to the SHMT family. In terms of assembly, homodimer. Pyridoxal 5'-phosphate is required as a cofactor.

Its subcellular location is the cytoplasm. Its pathway is amino-acid biosynthesis; glycine biosynthesis; glycine from L-serine: step 1/1. Catalyzes the reversible interconversion of serine and glycine with a modified folate serving as the one-carbon carrier. Also exhibits a pteridine-independent aldolase activity toward beta-hydroxyamino acids, producing glycine and aldehydes, via a retro-aldol mechanism. The polypeptide is Serine hydroxymethyltransferase (Thermococcus onnurineus (strain NA1)).